A 106-amino-acid polypeptide reads, in one-letter code: ATP-dependent Clp protease adapter protein ClpS (106 aa).

Belongs to the ClpS family. In terms of assembly, binds to the N-terminal domain of the chaperone ClpA.

Functionally, involved in the modulation of the specificity of the ClpAP-mediated ATP-dependent protein degradation. This is ATP-dependent Clp protease adapter protein ClpS from Vibrio atlanticus (strain LGP32) (Vibrio splendidus (strain Mel32)).